The chain runs to 214 residues: Probable transaldolase (214 aa).

Residue Lys83 is the Schiff-base intermediate with substrate of the active site.

This sequence belongs to the transaldolase family. Type 3B subfamily.

It is found in the cytoplasm. It catalyses the reaction D-sedoheptulose 7-phosphate + D-glyceraldehyde 3-phosphate = D-erythrose 4-phosphate + beta-D-fructose 6-phosphate. It participates in carbohydrate degradation; pentose phosphate pathway; D-glyceraldehyde 3-phosphate and beta-D-fructose 6-phosphate from D-ribose 5-phosphate and D-xylulose 5-phosphate (non-oxidative stage): step 2/3. In terms of biological role, transaldolase is important for the balance of metabolites in the pentose-phosphate pathway. This chain is Probable transaldolase, found in Streptococcus equi subsp. zooepidemicus (strain MGCS10565).